The primary structure comprises 173 residues: Ribosome maturation factor RimM (173 aa).

Residues 97–171 (EGEFFYHEII…QITIEPMEGL (75 aa)) enclose the PRC barrel domain.

It belongs to the RimM family. Binds ribosomal protein uS19.

It localises to the cytoplasm. An accessory protein needed during the final step in the assembly of 30S ribosomal subunit, possibly for assembly of the head region. Essential for efficient processing of 16S rRNA. May be needed both before and after RbfA during the maturation of 16S rRNA. It has affinity for free ribosomal 30S subunits but not for 70S ribosomes. This is Ribosome maturation factor RimM from Halalkalibacterium halodurans (strain ATCC BAA-125 / DSM 18197 / FERM 7344 / JCM 9153 / C-125) (Bacillus halodurans).